A 517-amino-acid chain; its full sequence is GMP synthase [glutamine-hydrolyzing] (517 aa).

In terms of domain architecture, Glutamine amidotransferase type-1 spans 11-202 (KIIVLDFGSQ…AFKVCGAKAN (192 aa)). Cys88 (nucleophile) is an active-site residue. Catalysis depends on residues His176 and Glu178. The GMPS ATP-PPase domain maps to 203–392 (WTMDDFIEMQ…LGIPHDLVWR (190 aa)). Residue 230 to 236 (SGGVDSS) participates in ATP binding.

Homodimer.

It carries out the reaction XMP + L-glutamine + ATP + H2O = GMP + L-glutamate + AMP + diphosphate + 2 H(+). Its pathway is purine metabolism; GMP biosynthesis; GMP from XMP (L-Gln route): step 1/1. In terms of biological role, catalyzes the synthesis of GMP from XMP. The sequence is that of GMP synthase [glutamine-hydrolyzing] from Lactobacillus johnsonii (strain CNCM I-12250 / La1 / NCC 533).